The primary structure comprises 29 residues: Kalata-B15 (29 aa).

Residues 1–29 constitute a cross-link (cyclopeptide (Gly-Asp)); sequence GLPVCGESCFGGSCYTPGCSCTWPICTRD. 3 disulfides stabilise this stretch: Cys-5/Cys-19, Cys-9/Cys-21, and Cys-14/Cys-26.

This is a cyclic peptide.

Its function is as follows. Probably participates in a plant defense mechanism. The sequence is that of Kalata-B15 from Oldenlandia affinis.